Here is a 705-residue protein sequence, read N- to C-terminus: MSATPAVLRASACSACRFSALRLFVSSFATPRAPLPAARTRILSPAVTYSTFRPSPRLLASPAIEEHAEPAAQEQPNKIEDAQAEANKAEASTETSNEGGADVPWYLQVDAPTHPTLVHEPPPLPDIPEGSPKLMEPLVKFVSDELGMDNLDLLDLRAIDPPPALGPEVLMLFGTARSERHLHVSADRLVRWLRNRGISAKADGLLGRNELKTKLRRKARKAKLLGTTGLPSGADDGITTGWICVNLGTIGWSDMEMEFKDENGMTSGFGVPQSGTTIVVQLMTETRREELALEKLWSGILRRSLERQDKIDGKLPDATFTTAPDTVSRSTFLRPTPIRSSGRNRKRPDRLYFSTSARQHAKAVDVSQTDLATAMAGWEYSNASPSTIDNLLAQDTDSKVQLLFQMQDYLYSLPKDQALSAVSLCEDGSPSTFMRLFNRAIENLPSAQAWEARLWLEKAARALQHPDHGLARLGDLIQEMKLSGAADLSREKFVDFLRMIFAIPETTDAGVRQQASLSMDVIDMLFSRGEKVIEFDVVVAVIESLLRTGVRTPEARRLLTQFEDLLGEAQMDCPTEDEIIRLLDVYAHYRAWEKFWNVWRIFPRYCERRTERMYTKVYERIAAVDHQAMATDALRWCVEEMWHEQPPVRVTPAMLKALEACIRIADPEAESLAKDIDDRISDAQYMDREFVRLWLTLHGSAAWGA.

A mitochondrion-targeting transit peptide spans 1–31 (MSATPAVLRASACSACRFSALRLFVSSFATP). 2 disordered regions span residues 83-102 (QAEANKAEASTETSNEGGAD) and 330-349 (STFLRPTPIRSSGRNRKRPD). The span at 330 to 341 (STFLRPTPIRSS) shows a compositional bias: polar residues.

Belongs to the ATP25 family.

It is found in the mitochondrion inner membrane. Probable mitochondrial mRNA stabilization factor. This Sordaria macrospora (strain ATCC MYA-333 / DSM 997 / K(L3346) / K-hell) protein is ATPase synthesis protein 25, mitochondrial (ATP25).